The chain runs to 310 residues: Malate dehydrogenase (310 aa).

NAD(+) contacts are provided by residues 7–12 (GAGHVG) and aspartate 32. Positions 81 and 87 each coordinate substrate. Residues asparagine 94 and 117–119 (VSN) contribute to the NAD(+) site. Positions 119 and 150 each coordinate substrate. The Proton acceptor role is filled by histidine 174.

Belongs to the LDH/MDH superfamily. MDH type 3 family.

It catalyses the reaction (S)-malate + NAD(+) = oxaloacetate + NADH + H(+). Its function is as follows. Catalyzes the reversible oxidation of malate to oxaloacetate. This Chlorobium phaeobacteroides (strain BS1) protein is Malate dehydrogenase.